The following is a 257-amino-acid chain: 1-(5-phosphoribosyl)-5-[(5-phosphoribosylamino)methylideneamino] imidazole-4-carboxamide isomerase (257 aa).

D8 serves as the catalytic Proton acceptor. The Proton donor role is filled by D131.

Belongs to the HisA/HisF family.

It localises to the cytoplasm. It carries out the reaction 1-(5-phospho-beta-D-ribosyl)-5-[(5-phospho-beta-D-ribosylamino)methylideneamino]imidazole-4-carboxamide = 5-[(5-phospho-1-deoxy-D-ribulos-1-ylimino)methylamino]-1-(5-phospho-beta-D-ribosyl)imidazole-4-carboxamide. The protein operates within amino-acid biosynthesis; L-histidine biosynthesis; L-histidine from 5-phospho-alpha-D-ribose 1-diphosphate: step 4/9. In Nitrosospira multiformis (strain ATCC 25196 / NCIMB 11849 / C 71), this protein is 1-(5-phosphoribosyl)-5-[(5-phosphoribosylamino)methylideneamino] imidazole-4-carboxamide isomerase.